The following is a 92-amino-acid chain: Cell division protein FtsL (92 aa).

At 1–3 (MGR) the chain is on the cytoplasmic side. Residues 4–21 (ISLIVAALLMLSAISLVT) traverse the membrane as a helical segment. The Periplasmic portion of the chain corresponds to 22–92 (SRYQSRQLFI…YMNQPAGGAQ (71 aa)).

It belongs to the FtsL family. Part of a complex composed of FtsB, FtsL and FtsQ.

It is found in the cell inner membrane. Functionally, essential cell division protein. May link together the upstream cell division proteins, which are predominantly cytoplasmic, with the downstream cell division proteins, which are predominantly periplasmic. This is Cell division protein FtsL from Bordetella pertussis (strain Tohama I / ATCC BAA-589 / NCTC 13251).